A 447-amino-acid polypeptide reads, in one-letter code: Argininosuccinate synthase (447 aa).

ATP-binding positions include 12–20 (AYSGGLDTS) and Ala39. 2 residues coordinate L-citrulline: Tyr92 and Ser97. Gly122 lines the ATP pocket. L-aspartate contacts are provided by Thr124, Asn128, and Asp129. Asn128 is an L-citrulline binding site. 5 residues coordinate L-citrulline: Arg132, Ser182, Ser191, Glu267, and Tyr279.

The protein belongs to the argininosuccinate synthase family. Type 1 subfamily. In terms of assembly, homotetramer.

The protein localises to the cytoplasm. The enzyme catalyses L-citrulline + L-aspartate + ATP = 2-(N(omega)-L-arginino)succinate + AMP + diphosphate + H(+). It participates in amino-acid biosynthesis; L-arginine biosynthesis; L-arginine from L-ornithine and carbamoyl phosphate: step 2/3. In Sulfurovum sp. (strain NBC37-1), this protein is Argininosuccinate synthase.